We begin with the raw amino-acid sequence, 500 residues long: E3 ubiquitin-protein ligase TRIM4 (500 aa).

The segment at 12-53 adopts an RING-type zinc-finger fold; that stretch reads CPICLDYFQDPVSIECGHNFCRGCLHRNWAPGGGPFPCPECR. The B box-type zinc-finger motif lies at 82-123; it reads VPPGLCGRHWEPLRLFCEDDQRPVCLVCRESQEHQTHAMAPI. Positions 87, 90, 109, and 115 each coordinate Zn(2+). Residues 212–253 adopt a coiled-coil conformation; the sequence is EEEDLFLQRLNKEEEETKKKLNENTLKLNQTIASLKKLILEV. A B30.2/SPRY domain is found at 288–500; sequence KVKTVCQIPL…LVIPPVTDRK (213 aa).

It belongs to the TRIM/RBCC family. In terms of assembly, homotrimer.

The protein localises to the cytoplasm. It catalyses the reaction S-ubiquitinyl-[E2 ubiquitin-conjugating enzyme]-L-cysteine + [acceptor protein]-L-lysine = [E2 ubiquitin-conjugating enzyme]-L-cysteine + N(6)-ubiquitinyl-[acceptor protein]-L-lysine.. It functions in the pathway protein modification; protein ubiquitination. Functionally, E3 ubiquitin-protein ligase. Mediates 'Lys-63'-linked polyubiquitination of the innate immune receptor RIGI, this linkage doesn't lead to proteasomal degradation but seems to enhance IFN induction. The protein is E3 ubiquitin-protein ligase TRIM4 (TRIM4) of Homo sapiens (Human).